The following is a 53-amino-acid chain: Sodium/potassium-transporting ATPase subunit gamma (53 aa).

A helical membrane pass occupies residues 16 to 34 (GGLIFAALAFIVGLVIILS).

The protein belongs to the FXYD family. Regulatory subunit of the sodium/potassium-transporting ATPase which is composed of a catalytic alpha subunit, an auxiliary non-catalytic beta subunit and an additional regulatory subunit. In terms of processing, the N-terminus is blocked. As to expression, highest levels expressed in the kidney and spleen. Restricted to the basolateral membrane in renal epithelial cells and varies in its level of expression along the nephron.

Its subcellular location is the membrane. Its function is as follows. May be involved in forming the receptor site for cardiac glycoside binding or may modulate the transport function of the sodium ATPase. This Ovis aries (Sheep) protein is Sodium/potassium-transporting ATPase subunit gamma (FXYD2).